Reading from the N-terminus, the 474-residue chain is Glutamate--tRNA ligase 1 (474 aa).

The short motif at 10-20 (PSPTGFLHIGG) is the 'HIGH' region element. The 'KMSKS' region signature appears at 239–243 (KLSKR). Lys-242 lines the ATP pocket.

This sequence belongs to the class-I aminoacyl-tRNA synthetase family. Glutamate--tRNA ligase type 1 subfamily. As to quaternary structure, monomer.

The protein resides in the cytoplasm. It catalyses the reaction tRNA(Glu) + L-glutamate + ATP = L-glutamyl-tRNA(Glu) + AMP + diphosphate. In terms of biological role, catalyzes the attachment of glutamate to tRNA(Glu) in a two-step reaction: glutamate is first activated by ATP to form Glu-AMP and then transferred to the acceptor end of tRNA(Glu). This is Glutamate--tRNA ligase 1 from Methylobacterium sp. (strain 4-46).